Here is a 420-residue protein sequence, read N- to C-terminus: MKKMSIVGAQWGDEGKGKVVNYFSEKFEWIVRFSGGANAGHTIYYKDKKYVNHMLPSIMPNSQSKGFLGAGMVLDLEKLVEELNILEADFPGMSSKFYIDLEAFLVLPWHKEEDEIIESMRKKPIGTTKRGIGPAYTDKVSREGIKLYYLFDEKMLKERLEDIYYLKSSLYGNKLKTSKDDVFEYLMKTKNELEKLKINYASAVEMGNVFRSTSVLFEGAQGVLLDLDFGTYPFVTSSSCMAHGVSSVGFSTFELDEVYGVLKAYTTRVGSGPFPTEIFGEEAHKIRELGKEYGATTGRPRRVGWLDLPALRYAKIRSGLTGLVITKADVLNGLDKIKVCTHYEVNGKTKDTPSSSYDFFVAKPIYTELNGWKDTNDINFLKYLSYIEEQIGVDIDYISYGPKTEEMCSKNDLILNMENK.

Residues 12 to 18 and 40 to 42 contribute to the GTP site; these read GDEGKGK and GHT. Asp-13 functions as the Proton acceptor in the catalytic mechanism. Mg(2+) contacts are provided by Asp-13 and Gly-40. IMP-binding positions include 13 to 16, 38 to 41, Thr-128, Arg-142, Gln-221, Thr-236, and Arg-299; these read DEGK and NAGH. Residue His-41 is the Proton donor of the active site. 295-301 serves as a coordination point for substrate; the sequence is ATTGRPR. GTP contacts are provided by residues Arg-301, 327–329, and 399–401; these read KAD and SYG.

Belongs to the adenylosuccinate synthetase family. In terms of assembly, homodimer. Mg(2+) serves as cofactor.

It is found in the cytoplasm. The catalysed reaction is IMP + L-aspartate + GTP = N(6)-(1,2-dicarboxyethyl)-AMP + GDP + phosphate + 2 H(+). It participates in purine metabolism; AMP biosynthesis via de novo pathway; AMP from IMP: step 1/2. Functionally, plays an important role in the de novo pathway of purine nucleotide biosynthesis. Catalyzes the first committed step in the biosynthesis of AMP from IMP. This Petrotoga mobilis (strain DSM 10674 / SJ95) protein is Adenylosuccinate synthetase.